The primary structure comprises 90 residues: Probable Fe(2+)-trafficking protein (90 aa).

Belongs to the Fe(2+)-trafficking protein family.

In terms of biological role, could be a mediator in iron transactions between iron acquisition and iron-requiring processes, such as synthesis and/or repair of Fe-S clusters in biosynthetic enzymes. The chain is Probable Fe(2+)-trafficking protein from Pseudomonas fluorescens (strain SBW25).